The chain runs to 328 residues: 2,3-diketo-L-gulonate-binding periplasmic protein YiaO (328 aa).

An N-terminal signal peptide occupies residues 1-24 (MKLRSVTYALFIAGLAAFSTSSLA).

The complex comprises the extracytoplasmic solute receptor protein YiaO, and the two transmembrane proteins YiaM and YiaN.

It localises to the periplasm. Functionally, part of the tripartite ATP-independent periplasmic (TRAP) transport system YiaMNO involved in the uptake of 2,3-diketo-L-gulonate. This protein specifically binds 2,3-diketo-L-gulonate. Is not able to bind either L-ascorbate or dehydroascorbate. In Escherichia coli (strain K12), this protein is 2,3-diketo-L-gulonate-binding periplasmic protein YiaO (yiaO).